The following is a 416-amino-acid chain: MFILLVLVTGVSAFTTPAVVHTGRVSESPVTSEKHPVLGDDCWFRGRDFKSELRLEGEPVVLRCPLVPHSDTSSSSRSLLTWSKSDSSQLIPGDEPRMWVKDDTLWVLPAVQQDSGTYICTFRNASHCEQMSLELKVFKNTEASFPLVSYLQISALSSTGLLVCPDLKEFISSRTDGKIQWYKGSILLDKGNKKFLSAGDPTRLLISNTSMGDAGYYRCVMTFTYEGKEYNITRNIELRVKGITTEPIPVIISPLETIPASLGSRLIVPCKVFLGTGTSSNTIVWWMANSTFISVAYPRGRVTEGLHHQYSENDENYVEVSLIFDPVTKEDLNTDFKCVATNPRSFQSLHTTVKEVSSTFSWGIALAPLSLIILVVGAIWIRRRCKRQAGKTYGLTKLPTDNQDFPSSPNQIKEMK.

The first 13 residues, 1–13 (MFILLVLVTGVSA), serve as a signal peptide directing secretion. At 14 to 355 (FTTPAVVHTG…FQSLHTTVKE (342 aa)) the chain is on the extracellular side. 3 Ig-like C2-type domains span residues 29–136 (PVTS…LELK), 146–233 (PLVS…YNIT), and 249–357 (PVII…KEVS). Intrachain disulfides connect cysteine 42–cysteine 128, cysteine 64–cysteine 120, and cysteine 164–cysteine 219. N-linked (GlcNAc...) asparagine glycans are attached at residues asparagine 124, asparagine 208, asparagine 231, and asparagine 289. A disulfide bridge connects residues cysteine 270 and cysteine 338. A helical membrane pass occupies residues 356 to 381 (VSSTFSWGIALAPLSLIILVVGAIWI). Over 382 to 416 (RRRCKRQAGKTYGLTKLPTDNQDFPSSPNQIKEMK) the chain is Cytoplasmic. The segment at 396–416 (TKLPTDNQDFPSSPNQIKEMK) is disordered. Polar residues predominate over residues 399–416 (PTDNQDFPSSPNQIKEMK).

The protein belongs to the interleukin-1 receptor family. In terms of assembly, associates with IL1RAP to form a non-signaling interleukin-1 receptor complex. A soluble form (sIL1R2) can also be produced by proteolytic cleavage at the cell surface (shedding) involving a metalloproteinase.

It is found in the membrane. It localises to the cell membrane. The protein localises to the secreted. Non-signaling receptor for IL1A, IL1B and IL1RN. Reduces IL1B activities. Serves as a decoy receptor by competitive binding to IL1B and preventing its binding to IL1R1. Also modulates cellular response through non-signaling association with IL1RAP after binding to IL1B. IL1R2 (membrane and secreted forms) preferentially binds IL1B and poorly IL1A and IL1RN. The secreted IL1R2 recruits secreted IL1RAP with high affinity; this complex formation may be the dominant mechanism for neutralization of IL1B by secreted/soluble receptors. This is Interleukin-1 receptor type 2 (Il1r2) from Rattus norvegicus (Rat).